The primary structure comprises 156 residues: Ribosome maturation factor RimP (156 aa).

This sequence belongs to the RimP family.

Its subcellular location is the cytoplasm. In terms of biological role, required for maturation of 30S ribosomal subunits. This is Ribosome maturation factor RimP from Dictyoglomus turgidum (strain DSM 6724 / Z-1310).